The chain runs to 1226 residues: Methionine synthase (1226 aa).

Residues 7–327 (KVQIEKQLSE…EHIRQMALVV (321 aa)) form the Hcy-binding domain. Zn(2+) is bound by residues Cys-249, Cys-312, and Cys-313. The 262-residue stretch at 358–619 (FINVGERTNV…VPEDLREAVE (262 aa)) folds into the Pterin-binding domain. One can recognise a B12-binding N-terminal domain in the interval 652-746 (SALEWRDWPV…FINASKEVGA (95 aa)). Residues Glu-696, 758–762 (GDVHD), His-761, Ser-806, Thr-810, and Ala-862 each bind methylcob(III)alamin. One can recognise a B12-binding domain in the interval 748-883 (NGKILLATVK…SDELKPSFVE (136 aa)). Residues 899-1226 (KQPRTKPVTL…AEKWLGPNLN (328 aa)) form the AdoMet activation domain. S-adenosyl-L-methionine-binding positions include Asp-949, Arg-1137, and 1192-1193 (YF).

It belongs to the vitamin-B12 dependent methionine synthase family. Methylcob(III)alamin is required as a cofactor. The cofactor is Zn(2+).

The catalysed reaction is (6S)-5-methyl-5,6,7,8-tetrahydrofolate + L-homocysteine = (6S)-5,6,7,8-tetrahydrofolate + L-methionine. It participates in amino-acid biosynthesis; L-methionine biosynthesis via de novo pathway; L-methionine from L-homocysteine (MetH route): step 1/1. Catalyzes the transfer of a methyl group from methyl-cobalamin to homocysteine, yielding enzyme-bound cob(I)alamin and methionine. Subsequently, remethylates the cofactor using methyltetrahydrofolate. This chain is Methionine synthase (metH), found in Aliivibrio fischeri (strain ATCC 700601 / ES114) (Vibrio fischeri).